Reading from the N-terminus, the 445-residue chain is N-succinylarginine dihydrolase (445 aa).

Substrate contacts are provided by residues 19–28, N110, and 137–138; these read AGLSFGNVAS and HR. The active site involves E174. R214 lines the substrate pocket. The active site involves H250. The substrate site is built by D252 and N363. C369 acts as the Nucleophile in catalysis.

The protein belongs to the succinylarginine dihydrolase family. As to quaternary structure, homodimer.

It catalyses the reaction N(2)-succinyl-L-arginine + 2 H2O + 2 H(+) = N(2)-succinyl-L-ornithine + 2 NH4(+) + CO2. Its pathway is amino-acid degradation; L-arginine degradation via AST pathway; L-glutamate and succinate from L-arginine: step 2/5. Its function is as follows. Catalyzes the hydrolysis of N(2)-succinylarginine into N(2)-succinylornithine, ammonia and CO(2). The protein is N-succinylarginine dihydrolase of Shewanella pealeana (strain ATCC 700345 / ANG-SQ1).